The chain runs to 956 residues: Outer capsid protein VP2 (956 aa).

The protein belongs to the orbivirus VP2 family.

The protein localises to the virion. Functionally, the VP2 protein is one of the two proteins (with VP5) which constitute the virus particle outer capsid. It is the major target of the host immunogenic response. Responsible for viral attachment to target host cell, probably by binding to sialic acid. This attachment induces virion internalization predominantly through clathrin-dependent endocytosis. This chain is Outer capsid protein VP2 (Segment-2), found in Bluetongue virus 11 (isolate USA) (BTV 11).